Here is a 387-residue protein sequence, read N- to C-terminus: Ferrochelatase (387 aa).

Residues H196 and E277 each coordinate Fe cation.

This sequence belongs to the ferrochelatase family.

Its subcellular location is the cytoplasm. The catalysed reaction is heme b + 2 H(+) = protoporphyrin IX + Fe(2+). Its pathway is porphyrin-containing compound metabolism; protoheme biosynthesis; protoheme from protoporphyrin-IX: step 1/1. Functionally, catalyzes the ferrous insertion into protoporphyrin IX. This Rippkaea orientalis (strain PCC 8801 / RF-1) (Cyanothece sp. (strain PCC 8801)) protein is Ferrochelatase.